We begin with the raw amino-acid sequence, 455 residues long: 2-oxoisovalerate dehydrogenase subunit alpha, mitochondrial (455 aa).

Residues 1 to 55 constitute a mitochondrion transit peptide; it reads MQGSAKMAMAVAVAVARVWRPSRGLGRTGLPLLRLLGARGLARFHPHRWQQQQHF. Y168 and R169 together coordinate thiamine diphosphate. Position 216 (S216) interacts with K(+). A thiamine diphosphate-binding site is contributed by S217. P218, T221, and Q222 together coordinate K(+). E248 provides a ligand contact to Mg(2+). Residues G249, A250, and R275 each contribute to the thiamine diphosphate site. Positions 277 and 279 each coordinate Mg(2+). H346 serves as a coordination point for thiamine diphosphate. A Phosphoserine; by BCKDK modification is found at S347. T348 bears the Phosphothreonine mark. Phosphoserine is present on residues S349 and S357. K366 is modified (N6-acetyllysine; alternate). K366 is modified (N6-succinyllysine; alternate). The residue at position 390 (K390) is an N6-succinyllysine.

This sequence belongs to the BCKDHA family. In terms of assembly, heterotetramer of 2 alpha/BCKDHA and 2 beta chains/BCKDHB that forms the branched-chain alpha-keto acid decarboxylase (E1) component of the BCKD complex. The branched-chain alpha-ketoacid dehydrogenase is a large complex composed of three major building blocks E1, E2 and E3. It is organized around E2, a 24-meric cubic core composed of DBT, to which are associated 6 to 12 copies of E1, and approximately 6 copies of the dehydrogenase E3, a DLD dimer. Interacts with PPM1K. Thiamine diphosphate is required as a cofactor. Mg(2+) serves as cofactor. Phosphorylated at Ser-347 by BCKDK and dephosphorylated by protein phosphatase PPM1K. In terms of tissue distribution, expressed in kidney (at protein level).

The protein localises to the mitochondrion matrix. It catalyses the reaction N(6)-[(R)-lipoyl]-L-lysyl-[protein] + 3-methyl-2-oxobutanoate + H(+) = N(6)-[(R)-S(8)-2-methylpropanoyldihydrolipoyl]-L-lysyl-[protein] + CO2. Together with BCKDHB forms the heterotetrameric E1 subunit of the mitochondrial branched-chain alpha-ketoacid dehydrogenase (BCKD) complex. The BCKD complex catalyzes the multi-step oxidative decarboxylation of alpha-ketoacids derived from the branched-chain amino-acids valine, leucine and isoleucine producing CO2 and acyl-CoA which is subsequently utilized to produce energy. The E1 subunit catalyzes the first step with the decarboxylation of the alpha-ketoacid forming an enzyme-product intermediate. A reductive acylation mediated by the lipoylamide cofactor of E2 extracts the acyl group from the E1 active site for the next step of the reaction. This chain is 2-oxoisovalerate dehydrogenase subunit alpha, mitochondrial (BCKDHA), found in Bos taurus (Bovine).